A 521-amino-acid chain; its full sequence is MALVRLLGVECRNALQRSYSTASVPTTKMFIDGKFVDSKTTEWIDLHDPATNKVVTRVPKCTQDEMESAVESSKKAFKTWSQTSILGRQQVMFKLQHLIRNNMSELAKNITKEQGKTLVDAEGDVLRGLQVVEHCCSITSLQMGETVPNIAKDMDTYSYTLPLGVTAGICPFNFPAMIPLWMFPVAITCGNTSIIKPSERVPGATMMLMELLNEAGCPPGVVNVIHGAHDAVNFICDNPTIKAVSFVGSDQAGKYIYERAGRNGKRVQSNMGAKNHGVIMADANKENTLNQLAGAAFGAAGQRCMALSTAVFVGEAKQWIPDLVERARKLKVNAGHVPGTDVGPVISPQSKQRINELVESGVKEGAKLVLDGRSIKVENFENGNFVGPTILTDVSTNMKCYTEEIFGPVLVCLTVDTVDEAVEMINNNPYGNGTAIFTTNGATARKFVNEIDVGQVGVNVPIPVPLPMFSFTGSRGSFMGDCHFYGKQGVKFYTQTKTVTQLWREGDVSHTKAAVAMPTMK.

Phe172, Lys196, Glu199, Arg200, and Ser249 together coordinate NAD(+). Catalysis depends on Cys304, which acts as the Nucleophile. An NAD(+)-binding site is contributed by Glu404.

This sequence belongs to the aldehyde dehydrogenase family. In terms of assembly, homotetramer.

The protein resides in the mitochondrion. It carries out the reaction 2-methyl-3-oxopropanoate + NAD(+) + CoA + H2O = propanoyl-CoA + hydrogencarbonate + NADH + H(+). It catalyses the reaction 3-oxopropanoate + NAD(+) + CoA + H2O = hydrogencarbonate + acetyl-CoA + NADH + H(+). Its function is as follows. Probable malonate and methylmalonate semialdehyde dehydrogenase involved in the catabolism of valine, thymine, and compounds catabolized by way of beta-alanine, including uracil and cytidine. The sequence is that of Probable methylmalonate-semialdehyde/malonate-semialdehyde dehydrogenase [acylating], mitochondrial from Aedes aegypti (Yellowfever mosquito).